The chain runs to 257 residues: Probable enoyl-CoA hydratase (257 aa).

It belongs to the enoyl-CoA hydratase/isomerase family.

It carries out the reaction a (3S)-3-hydroxyacyl-CoA = a (2E)-enoyl-CoA + H2O. The catalysed reaction is a 4-saturated-(3S)-3-hydroxyacyl-CoA = a (3E)-enoyl-CoA + H2O. In terms of biological role, could possibly oxidize fatty acids using specific components. This is Probable enoyl-CoA hydratase (fadB1) from Rhodobacter capsulatus (strain ATCC BAA-309 / NBRC 16581 / SB1003).